Reading from the N-terminus, the 159-residue chain is NAD(P)H-quinone oxidoreductase subunit J, chloroplastic (159 aa).

Belongs to the complex I 30 kDa subunit family. NDH is composed of at least 16 different subunits, 5 of which are encoded in the nucleus.

Its subcellular location is the plastid. The protein resides in the chloroplast thylakoid membrane. It catalyses the reaction a plastoquinone + NADH + (n+1) H(+)(in) = a plastoquinol + NAD(+) + n H(+)(out). The enzyme catalyses a plastoquinone + NADPH + (n+1) H(+)(in) = a plastoquinol + NADP(+) + n H(+)(out). Its function is as follows. NDH shuttles electrons from NAD(P)H:plastoquinone, via FMN and iron-sulfur (Fe-S) centers, to quinones in the photosynthetic chain and possibly in a chloroplast respiratory chain. The immediate electron acceptor for the enzyme in this species is believed to be plastoquinone. Couples the redox reaction to proton translocation, and thus conserves the redox energy in a proton gradient. The chain is NAD(P)H-quinone oxidoreductase subunit J, chloroplastic from Brachypodium distachyon (Purple false brome).